Consider the following 344-residue polypeptide: tRNA N6-adenosine threonylcarbamoyltransferase (344 aa).

Positions 119 and 123 each coordinate Fe cation. Substrate contacts are provided by residues 141–145 (VVSGG), Asp-174, Gly-187, Asp-191, and Asn-280. Asp-310 is a binding site for Fe cation.

This sequence belongs to the KAE1 / TsaD family. The cofactor is Fe(2+).

It is found in the cytoplasm. It carries out the reaction L-threonylcarbamoyladenylate + adenosine(37) in tRNA = N(6)-L-threonylcarbamoyladenosine(37) in tRNA + AMP + H(+). In terms of biological role, required for the formation of a threonylcarbamoyl group on adenosine at position 37 (t(6)A37) in tRNAs that read codons beginning with adenine. Is involved in the transfer of the threonylcarbamoyl moiety of threonylcarbamoyl-AMP (TC-AMP) to the N6 group of A37, together with TsaE and TsaB. TsaD likely plays a direct catalytic role in this reaction. The sequence is that of tRNA N6-adenosine threonylcarbamoyltransferase from Listeria monocytogenes serotype 4b (strain CLIP80459).